Here is a 329-residue protein sequence, read N- to C-terminus: NADH-quinone oxidoreductase subunit H (329 aa).

A run of 8 helical transmembrane segments spans residues 9-29 (ILKV…LTYV), 79-99 (IAPV…PFFP), 117-137 (VGIL…LLAG), 162-182 (VSGL…LIEI), 188-208 (GGIF…FLIA), 243-263 (FFIG…LLFF), 269-289 (LWFI…LFLF), and 309-329 (WKVL…VLIL).

It belongs to the complex I subunit 1 family. As to quaternary structure, NDH-1 is composed of 14 different subunits. Subunits NuoA, H, J, K, L, M, N constitute the membrane sector of the complex.

The protein localises to the cell inner membrane. The enzyme catalyses a quinone + NADH + 5 H(+)(in) = a quinol + NAD(+) + 4 H(+)(out). Functionally, NDH-1 shuttles electrons from NADH, via FMN and iron-sulfur (Fe-S) centers, to quinones in the respiratory chain. The immediate electron acceptor for the enzyme in this species is believed to be ubiquinone. Couples the redox reaction to proton translocation (for every two electrons transferred, four hydrogen ions are translocated across the cytoplasmic membrane), and thus conserves the redox energy in a proton gradient. This subunit may bind ubiquinone. This is NADH-quinone oxidoreductase subunit H from Wolinella succinogenes (strain ATCC 29543 / DSM 1740 / CCUG 13145 / JCM 31913 / LMG 7466 / NCTC 11488 / FDC 602W) (Vibrio succinogenes).